A 333-amino-acid polypeptide reads, in one-letter code: Probable siderophore transport system permease protein YfiZ (333 aa).

The N-terminal stretch at 1–31 (MICKKASSKWIVLVCLIFILLTAVCASVVYG) is a signal peptide. The next 8 helical transmembrane spans lie at 64–84 (ALVATVVGASLAAAGALMQAL), 94–114 (IFGINAGAGFFIVAGSFFLHI), 119–139 (ALVWSSFLGAAFTAAIVYAAG), 152–172 (TLAGAAMAAMFSSLTQGLLSV), 193–213 (LDLLMTMFPYAAAALVICFFL), 246–266 (VMLAGSAVAIAGPISFIGIII), 280–300 (WVLPFSAVLGAILLVCADIGA), and 303–323 (IIMPQEVPVGVMTAIIGMPVF).

Belongs to the binding-protein-dependent transport system permease family. FecCD subfamily. As to quaternary structure, the complex is composed of one ATP-binding protein (YusV), two transmembrane proteins (YfiZ and YfhA) and a solute-binding protein (YfiY).

It localises to the cell membrane. Functionally, part of the ABC transporter complex YfiYZ/YfhA/YusV involved in import of the iron-hydroxamate siderophores schizokinen, arthrobactin and corprogen. In Bacillus subtilis (strain 168), this protein is Probable siderophore transport system permease protein YfiZ (yfiZ).